A 380-amino-acid polypeptide reads, in one-letter code: Queuine tRNA-ribosyltransferase (380 aa).

Catalysis depends on Asp96, which acts as the Proton acceptor. Residues 96-100, Asp150, Gln193, and Gly220 each bind substrate; that span reads DSGGF. An RNA binding region spans residues 251–257; sequence GVGAPDS. The active-site Nucleophile is Asp270. The RNA binding; important for wobble base 34 recognition stretch occupies residues 275–279; it reads TRIAR. The Zn(2+) site is built by Cys308, Cys310, Cys313, and His339.

Belongs to the queuine tRNA-ribosyltransferase family. In terms of assembly, homodimer. Within each dimer, one monomer is responsible for RNA recognition and catalysis, while the other monomer binds to the replacement base PreQ1. Zn(2+) is required as a cofactor.

The enzyme catalyses 7-aminomethyl-7-carbaguanine + guanosine(34) in tRNA = 7-aminomethyl-7-carbaguanosine(34) in tRNA + guanine. Its pathway is tRNA modification; tRNA-queuosine biosynthesis. Catalyzes the base-exchange of a guanine (G) residue with the queuine precursor 7-aminomethyl-7-deazaguanine (PreQ1) at position 34 (anticodon wobble position) in tRNAs with GU(N) anticodons (tRNA-Asp, -Asn, -His and -Tyr). Catalysis occurs through a double-displacement mechanism. The nucleophile active site attacks the C1' of nucleotide 34 to detach the guanine base from the RNA, forming a covalent enzyme-RNA intermediate. The proton acceptor active site deprotonates the incoming PreQ1, allowing a nucleophilic attack on the C1' of the ribose to form the product. After dissociation, two additional enzymatic reactions on the tRNA convert PreQ1 to queuine (Q), resulting in the hypermodified nucleoside queuosine (7-(((4,5-cis-dihydroxy-2-cyclopenten-1-yl)amino)methyl)-7-deazaguanosine). The protein is Queuine tRNA-ribosyltransferase of Streptococcus pyogenes serotype M3 (strain ATCC BAA-595 / MGAS315).